Here is a 62-residue protein sequence, read N- to C-terminus: Potassium channel toxin kappa-KTx 1.4 (62 aa).

An N-terminal signal peptide occupies residues 1 to 26 (MKSCLINVSLLILLLLPILGYASVNA). A propeptide spanning residues 27–38 (ESIDGENDFEEE) is cleaved from the precursor. Disulfide bonds link cysteine 43/cysteine 61 and cysteine 47/cysteine 57.

It belongs to the short scorpion toxin superfamily. Potassium channel inhibitor kappa-KTx family. Kappa-KTx 1 subfamily. In terms of tissue distribution, expressed by the venom gland.

Its subcellular location is the secreted. In terms of biological role, shows structural homology with WaTx suggesting that it acts as a cell-penetrating peptide (CPP) with defensive purpose that induces pain by specifically activating mammalian sensory neuron TRPA1 channels. Has no effect on the voltage-gated potassium channels tested. This is Potassium channel toxin kappa-KTx 1.4 from Heterometrus petersii (Asian forest scorpion).